The sequence spans 987 residues: Ephrin type-B receptor 4a (987 aa).

Positions 1–24 are cleaved as a signal peptide; the sequence is MELFSRNVAAFWIILLEFLLGSVA. The Extracellular portion of the chain corresponds to 25–548; it reads EEEVLMNTKT…DSSSPLLVTG (524 aa). The Eph LBD domain occupies 26-205; sequence EEVLMNTKTE…FFKKCPALTR (180 aa). 2 disulfides stabilise this stretch: Cys-70–Cys-187 and Cys-104–Cys-114. Residues 319 to 340 form a disordered region; sequence DSADTPCTRPPSSPRSPVPQVN. A compositionally biased stretch (pro residues) spans 326-335; sequence TRPPSSPRSP. Fibronectin type-III domains lie at 328 to 438 and 442 to 536; these read PPSS…TSPN and LVSG…TLPD. Residues 549-569 form a helical membrane-spanning segment; sequence ILIAMGMLLLIIVIGAAIYCI. The Cytoplasmic portion of the chain corresponds to 570–987; it reads RKQNNYKDPE…QNKAPGNVLY (418 aa). The Protein kinase domain occupies 621–884; it reads VKIEEVIGAG…NIVSALDKLI (264 aa). Residues 627 to 635 and Lys-653 contribute to the ATP site; that span reads IGAGEFGEV. Asp-746 (proton acceptor) is an active-site residue. The 65-residue stretch at 914-978 folds into the SAM domain; sequence SSCGTVGDWL…LSSIEALGIQ (65 aa).

This sequence belongs to the protein kinase superfamily. Tyr protein kinase family. Ephrin receptor subfamily.

It is found in the cell membrane. The enzyme catalyses L-tyrosyl-[protein] + ATP = O-phospho-L-tyrosyl-[protein] + ADP + H(+). Receptor tyrosine kinase which binds promiscuously transmembrane ephrin-B family ligands residing on adjacent cells, leading to contact-dependent bidirectional signaling into neighboring cells. The signaling pathway downstream of the receptor is referred to as forward signaling while the signaling pathway downstream of the ephrin ligand is referred to as reverse signaling. Together with its cognate ligand/functional ligand EFNB2 is involved in the regulation of cell adhesion and cell migration, and plays a central role in heart morphogenesis, angiogenesis and blood vessel remodeling and permeability. EPHB4-mediated forward signaling controls cellular repulsion and segregation from EFNB2-expressing cells. Involved in somitogenesis. In Danio rerio (Zebrafish), this protein is Ephrin type-B receptor 4a.